A 464-amino-acid chain; its full sequence is ATP synthase subunit beta (464 aa).

153–160 (GGAGVGKT) is a binding site for ATP.

It belongs to the ATPase alpha/beta chains family. F-type ATPases have 2 components, CF(1) - the catalytic core - and CF(0) - the membrane proton channel. CF(1) has five subunits: alpha(3), beta(3), gamma(1), delta(1), epsilon(1). CF(0) has three main subunits: a(1), b(2) and c(9-12). The alpha and beta chains form an alternating ring which encloses part of the gamma chain. CF(1) is attached to CF(0) by a central stalk formed by the gamma and epsilon chains, while a peripheral stalk is formed by the delta and b chains.

The protein resides in the cell membrane. The enzyme catalyses ATP + H2O + 4 H(+)(in) = ADP + phosphate + 5 H(+)(out). Produces ATP from ADP in the presence of a proton gradient across the membrane. The catalytic sites are hosted primarily by the beta subunits. This chain is ATP synthase subunit beta, found in Acetivibrio thermocellus (strain ATCC 27405 / DSM 1237 / JCM 9322 / NBRC 103400 / NCIMB 10682 / NRRL B-4536 / VPI 7372) (Clostridium thermocellum).